Here is a 1004-residue protein sequence, read N- to C-terminus: Ephrin type-B receptor 2 (1004 aa).

An N-terminal signal peptide occupies residues 1–19; the sequence is MGPLWFCCLPLALLPLLAA. The Extracellular portion of the chain corresponds to 20 to 544; that stretch reads VEETLMDSTT…QTSVQEKLPL (525 aa). The 183-residue stretch at 21-203 folds into the Eph LBD domain; it reads EETLMDSTTA…FYRKCPRVIQ (183 aa). Disulfide bonds link C63/C185 and C98/C108. N-linked (GlcNAc...) asparagine glycans are attached at residues N266, N337, N429, N478, and N483. 2 consecutive Fibronectin type-III domains span residues 325–435 and 436–531; these read IPSA…TNQA and APSA…TMTE. The helical transmembrane segment at 545-565 threads the bilayer; sequence IIGSSAAGLVFLIAVVVIIIV. Topologically, residues 566 to 1004 are cytoplasmic; that stretch reads CNRRRGFERA…QMNQIQSVEV (439 aa). Residues 639–902 enclose the Protein kinase domain; the sequence is VKIEQVIGAG…QIVNTLDKMI (264 aa). ATP contacts are provided by residues 645–653 and K671; that span reads IGAGEFGEV. Catalysis depends on D764, which acts as the Proton acceptor. Residues 931–995 enclose the SAM domain; sequence TSFNTVDEWL…LNSIQVMRAQ (65 aa). The PDZ-binding signature appears at 1002–1004; that stretch reads VEV.

This sequence belongs to the protein kinase superfamily. Tyr protein kinase family. Ephrin receptor subfamily. As to quaternary structure, heterotetramer upon binding of the ligand. The heterotetramer is composed of an ephrin dimer and a receptor dimer. Oligomerization is probably required to induce biological responses. Post-translationally, ligand binding induces cleavage by matrix metalloproteinases (MMPs) such as MMP7/MMP9, producing an EphB2/N-terminal fragment (NTF) and a C-terminal long fragment (EphB2-LF). EphB2-LF is further cleaved by MMPs, producing EphB2/CTF1 which is further cleaved by the PS1/gamma-secretase producing EphB2/CTF2. Wide tissue distribution throughout development and sustained expression in adult brain. The longer form (CEK5+) is specifically expressed in the central nervous system.

The protein localises to the cell membrane. It localises to the cell projection. Its subcellular location is the axon. It is found in the dendrite. It carries out the reaction L-tyrosyl-[protein] + ATP = O-phospho-L-tyrosyl-[protein] + ADP + H(+). Receptor tyrosine kinase which binds promiscuously transmembrane ephrin-B family ligands residing on adjacent cells, leading to contact-dependent bidirectional signaling into neighboring cells. The signaling pathway downstream of the receptor is referred to as forward signaling while the signaling pathway downstream of the ephrin ligand is referred to as reverse signaling. Functions in axon guidance during development. In addition to axon guidance, also regulates dendritic spines development and maturation and stimulates the formation of excitatory synapses. The polypeptide is Ephrin type-B receptor 2 (EPHB2) (Gallus gallus (Chicken)).